Consider the following 83-residue polypeptide: U25-theraphotoxin-Cg1b (83 aa).

The signal sequence occupies residues 1 to 23; the sequence is MRFHTLLFLSFLLLVSCALICTA. A propeptide spanning residues 24-48 is cleaved from the precursor; it reads QHPGLEKSGMFHENVGKGQHIEEKR. Cystine bridges form between C50-C66, C57-C71, and C65-C79.

This sequence belongs to the neurotoxin 07 (Beta/delta-agtx) family. 03 (aga-4) subfamily. JZTX sub-subfamily. In terms of tissue distribution, expressed by the venom gland.

It is found in the secreted. Its function is as follows. Probable ion channel inhibitor. The sequence is that of U25-theraphotoxin-Cg1b from Chilobrachys guangxiensis (Chinese earth tiger tarantula).